A 344-amino-acid polypeptide reads, in one-letter code: Methionine import ATP-binding protein MetN (344 aa).

The region spanning 2-241 (IKLEKISKIF…PQTQLAKEFI (240 aa)) is the ABC transporter domain. 38 to 45 (GASGAGKS) contacts ATP.

This sequence belongs to the ABC transporter superfamily. Methionine importer (TC 3.A.1.24) family. In terms of assembly, the complex is composed of two ATP-binding proteins (MetN), two transmembrane proteins (MetI) and a solute-binding protein (MetQ).

The protein localises to the cell inner membrane. It carries out the reaction L-methionine(out) + ATP + H2O = L-methionine(in) + ADP + phosphate + H(+). It catalyses the reaction D-methionine(out) + ATP + H2O = D-methionine(in) + ADP + phosphate + H(+). In terms of biological role, part of the ABC transporter complex MetNIQ involved in methionine import. Responsible for energy coupling to the transport system. The polypeptide is Methionine import ATP-binding protein MetN (Pasteurella multocida (strain Pm70)).